The following is a 411-amino-acid chain: Serpin A3-2 (411 aa).

A signal peptide spans 1-24 (MRAERTSFLLALGLLVAGIRSVHC). N100, N180, N230, and N264 each carry an N-linked (GlcNAc...) asparagine glycan.

Belongs to the serpin family. In terms of assembly, homodimer.

It localises to the cytoplasmic vesicle. The protein localises to the secretory vesicle. It is found in the chromaffin granule. The protein resides in the secreted. Serine protease inhibitor. The sequence is that of Serpin A3-2 from Bos taurus (Bovine).